We begin with the raw amino-acid sequence, 565 residues long: NAD-dependent malic enzyme (565 aa).

Tyrosine 104 acts as the Proton donor in catalysis. Arginine 157 provides a ligand contact to NAD(+). Lysine 175 (proton acceptor) is an active-site residue. 3 residues coordinate a divalent metal cation: glutamate 246, aspartate 247, and aspartate 270. Positions 270 and 418 each coordinate NAD(+).

It belongs to the malic enzymes family. Homotetramer. Requires Mg(2+) as cofactor. The cofactor is Mn(2+).

The catalysed reaction is (S)-malate + NAD(+) = pyruvate + CO2 + NADH. It catalyses the reaction oxaloacetate + H(+) = pyruvate + CO2. The sequence is that of NAD-dependent malic enzyme from Edwardsiella ictaluri (strain 93-146).